We begin with the raw amino-acid sequence, 201 residues long: Small ribosomal subunit protein uS4 (201 aa).

Residues 93–155 enclose the S4 RNA-binding domain; the sequence is CRLDNIVYRM…SKSLSMFEVN (63 aa).

This sequence belongs to the universal ribosomal protein uS4 family. Part of the 30S ribosomal subunit. Contacts protein S5. The interaction surface between S4 and S5 is involved in control of translational fidelity.

One of the primary rRNA binding proteins, it binds directly to 16S rRNA where it nucleates assembly of the body of the 30S subunit. In terms of biological role, with S5 and S12 plays an important role in translational accuracy. The protein is Small ribosomal subunit protein uS4 of Elusimicrobium minutum (strain Pei191).